A 218-amino-acid polypeptide reads, in one-letter code: Glutathione S-transferase Mu 2 (218 aa).

The GST N-terminal domain maps to 2–88; that stretch reads PMTLGYWNIR…YIARKHNLCG (87 aa). 7–8 lines the glutathione pocket; sequence YW. Residues Ser27 and Ser44 each carry the phosphoserine modification. Residues 43-46, Lys50, 59-60, and 72-73 each bind glutathione; these read RSQW, NL, and QS. The 119-residue stretch at 90–208 folds into the GST C-terminal domain; sequence SEKEQIREDI…KSSRFLPRPV (119 aa). Tyr116 provides a ligand contact to substrate.

It belongs to the GST superfamily. Mu family. As to quaternary structure, homodimer. As to expression, muscle.

The protein localises to the cytoplasm. It catalyses the reaction RX + glutathione = an S-substituted glutathione + a halide anion + H(+). It carries out the reaction 11(S)-hydroxy-14(S),15(S)-epoxy-(5Z,8Z,12E)-eicosatrienoate + glutathione = (11S,15S)-dihydroxy-14(R)-S-glutathionyl-(5Z,8Z,12E)-eicosatrienoate. Conjugation of reduced glutathione to a wide number of exogenous and endogenous hydrophobic electrophiles. Participates in the formation of novel hepoxilin regioisomers. This chain is Glutathione S-transferase Mu 2, found in Homo sapiens (Human).